A 129-amino-acid chain; its full sequence is MKNFHVVLEAAWLVRDVKTADDAIGVAISEAGKRLNPKLDFVEVDVGTTSCPVCGEPFSSVFIAANTALVGLIFEMKVFDAESAEHAERIAKSVIGKSLRDVPLTVVEVTEFERSVEKGEQQQKGKANK.

This sequence belongs to the UPF0212 family.

This Methanosarcina mazei (strain ATCC BAA-159 / DSM 3647 / Goe1 / Go1 / JCM 11833 / OCM 88) (Methanosarcina frisia) protein is UPF0212 protein MM_2357.